The sequence spans 154 residues: Urease accessory protein UreE (154 aa).

Residues 135-154 (PENGAYHGTGGHHHHHHDHE) are disordered. Positions 144–154 (GGHHHHHHDHE) are enriched in basic residues.

Belongs to the UreE family.

It localises to the cytoplasm. Involved in urease metallocenter assembly. Binds nickel. Probably functions as a nickel donor during metallocenter assembly. The protein is Urease accessory protein UreE of Teredinibacter turnerae (strain ATCC 39867 / T7901).